Reading from the N-terminus, the 223-residue chain is Golgi SNAP receptor complex member 1 (223 aa).

S2 is subject to N-acetylserine. The Cytoplasmic portion of the chain corresponds to 2–204; the sequence is SSQPSFVTIR…MKINTRRKKN (203 aa). S164 carries the post-translational modification Phosphoserine. A helical; Anchor for type IV membrane protein membrane pass occupies residues 205 to 222; sequence AFVLATITTLCILFLFFT. Position 223 (W223) is a topological domain, vesicular.

Belongs to the GOSR1 family. Component of several multiprotein Golgi SNARE complexes. Identified in a Golgi SNARE complex consisting of t-SNARES SED5, YKT6, and the v-SNARE SFT1. Interacts with BET1. Interacts with BOS1. Interacts with SEC22. Interacts with PEP12. Interacts with self.

It is found in the golgi apparatus membrane. Involved in transport from the ER to the Golgi apparatus as well as in intra-Golgi transport. It belongs to a super-family of proteins called t-SNAREs or soluble NSF (N-ethylmaleimide-sensitive factor) attachment protein receptor. Rescues alpha-factor maturation defects. The sequence is that of Golgi SNAP receptor complex member 1 (GOS1) from Saccharomyces cerevisiae (strain ATCC 204508 / S288c) (Baker's yeast).